The sequence spans 283 residues: Pyridoxine/pyridoxal/pyridoxamine kinase (283 aa).

Substrate is bound by residues Ser-23 and His-59. Residue Asp-125 participates in ATP binding. A Mg(2+)-binding site is contributed by Tyr-136. Residues Thr-157, Glu-162, Thr-195, 222–225 (HAHV), and Thr-232 each bind ATP. Glu-162 serves as a coordination point for Mg(2+). Asp-234 contacts substrate.

Belongs to the pyridoxine kinase family. PdxK subfamily. As to quaternary structure, homodimer. The cofactor is Mg(2+).

The catalysed reaction is pyridoxal + ATP = pyridoxal 5'-phosphate + ADP + H(+). It catalyses the reaction pyridoxine + ATP = pyridoxine 5'-phosphate + ADP + H(+). It carries out the reaction pyridoxamine + ATP = pyridoxamine 5'-phosphate + ADP + H(+). Its pathway is cofactor metabolism; pyridoxal 5'-phosphate salvage; pyridoxal 5'-phosphate from pyridoxal: step 1/1. It participates in cofactor metabolism; pyridoxal 5'-phosphate salvage; pyridoxine 5'-phosphate from pyridoxine: step 1/1. It functions in the pathway cofactor metabolism; pyridoxal 5'-phosphate salvage; pyridoxamine 5'-phosphate from pyridoxamine: step 1/1. B6-vitamer kinase involved in the salvage pathway of pyridoxal 5'-phosphate (PLP). Catalyzes the phosphorylation of pyridoxine (PN), pyridoxal (PL), and pyridoxamine (PM), forming their respective 5'-phosphorylated esters, i.e. PNP, PLP and PMP. The chain is Pyridoxine/pyridoxal/pyridoxamine kinase from Bordetella pertussis (strain Tohama I / ATCC BAA-589 / NCTC 13251).